A 317-amino-acid chain; its full sequence is Methionyl-tRNA formyltransferase (317 aa).

112-115 (SILP) is a binding site for (6S)-5,6,7,8-tetrahydrofolate.

The protein belongs to the Fmt family.

It catalyses the reaction L-methionyl-tRNA(fMet) + (6R)-10-formyltetrahydrofolate = N-formyl-L-methionyl-tRNA(fMet) + (6S)-5,6,7,8-tetrahydrofolate + H(+). Attaches a formyl group to the free amino group of methionyl-tRNA(fMet). The formyl group appears to play a dual role in the initiator identity of N-formylmethionyl-tRNA by promoting its recognition by IF2 and preventing the misappropriation of this tRNA by the elongation apparatus. This chain is Methionyl-tRNA formyltransferase, found in Mannheimia succiniciproducens (strain KCTC 0769BP / MBEL55E).